Here is a 330-residue protein sequence, read N- to C-terminus: MQNLGIAITGSGSAAPETSLHNEELSQLVETSDEWISTRTGIRQRRLALPTESLSSLAAAASRQAIASAGITASDIDLILLATSTPDDLFGTATKIQAELGATKAVAFDLTAACSGFVFGLVTAAQFIRTGVYQNVLLIGADILSRWVDWQDRRTCVLFGDGAGAIVLQSNQSDRLLGFALKSDGTQNHYLNLAYQGTAQEILPNIKITQGTYQPVTMNGKEVYRFAAQKVPEIIDKALFEANITVDQIDWLLLHQANQRILDTVAQRLNIPAHKVISNLANYGNTSAASIPLALDEAVREGKIKPNDIIATSGFGAGLTWGAAIFQWGR.

Active-site residues include C114 and H255. The tract at residues 256–260 (QANQR) is ACP-binding. Residue N285 is part of the active site.

Belongs to the thiolase-like superfamily. FabH family. In terms of assembly, homodimer.

It localises to the cytoplasm. The enzyme catalyses malonyl-[ACP] + acetyl-CoA + H(+) = 3-oxobutanoyl-[ACP] + CO2 + CoA. Its pathway is lipid metabolism; fatty acid biosynthesis. Catalyzes the condensation reaction of fatty acid synthesis by the addition to an acyl acceptor of two carbons from malonyl-ACP. Catalyzes the first condensation reaction which initiates fatty acid synthesis and may therefore play a role in governing the total rate of fatty acid production. Possesses both acetoacetyl-ACP synthase and acetyl transacylase activities. Its substrate specificity determines the biosynthesis of branched-chain and/or straight-chain of fatty acids. The polypeptide is Beta-ketoacyl-[acyl-carrier-protein] synthase III (Trichormus variabilis (strain ATCC 29413 / PCC 7937) (Anabaena variabilis)).